The following is a 285-amino-acid chain: ATP synthase subunit a (285 aa).

6 consecutive transmembrane segments (helical) span residues Thr41–Phe61, Ile102–Ile122, Leu164–Ile184, Val197–Ser217, Leu226–Met246, and Phe252–Leu272.

It belongs to the ATPase A chain family. F-type ATPases have 2 components, CF(1) - the catalytic core - and CF(0) - the membrane proton channel. CF(1) has five subunits: alpha(3), beta(3), gamma(1), delta(1), epsilon(1). CF(0) has three main subunits: a(1), b(2) and c(9-12). The alpha and beta chains form an alternating ring which encloses part of the gamma chain. CF(1) is attached to CF(0) by a central stalk formed by the gamma and epsilon chains, while a peripheral stalk is formed by the delta and b chains.

The protein localises to the cell inner membrane. Key component of the proton channel; it plays a direct role in the translocation of protons across the membrane. In Pseudoalteromonas translucida (strain TAC 125), this protein is ATP synthase subunit a.